We begin with the raw amino-acid sequence, 204 residues long: Guanylate kinase (204 aa).

The 179-residue stretch at 18–196 folds into the Guanylate kinase-like domain; it reads PKLFTISAPA…SYEILKSIFI (179 aa). 25–32 is an ATP binding site; sequence APAGAGKT.

This sequence belongs to the guanylate kinase family.

The protein localises to the cytoplasm. The enzyme catalyses GMP + ATP = GDP + ADP. In terms of biological role, essential for recycling GMP and indirectly, cGMP. The polypeptide is Guanylate kinase (Chlamydia felis (strain Fe/C-56) (Chlamydophila felis)).